A 206-amino-acid chain; its full sequence is Large ribosomal subunit protein uL4 (206 aa).

This sequence belongs to the universal ribosomal protein uL4 family. In terms of assembly, part of the 50S ribosomal subunit.

Its function is as follows. One of the primary rRNA binding proteins, this protein initially binds near the 5'-end of the 23S rRNA. It is important during the early stages of 50S assembly. It makes multiple contacts with different domains of the 23S rRNA in the assembled 50S subunit and ribosome. Forms part of the polypeptide exit tunnel. This is Large ribosomal subunit protein uL4 from Cereibacter sphaeroides (strain KD131 / KCTC 12085) (Rhodobacter sphaeroides).